Here is a 117-residue protein sequence, read N- to C-terminus: Minor capsid protein VP2 (117 aa).

The protein belongs to the lagovirus VP2 protein family. As to quaternary structure, homooligomer. The portal-like structure consists in 12 copies of VP2. Interacts with capsid protein VP1.

The protein resides in the virion. The protein localises to the host cytoplasm. Functionally, minor structural protein that forms a portal-like structure at a unique three-fold axis of symmetry, following binding to the host receptor. The channel formed by VP2 may allow the delivery of the viral genome through the host endosomal membrane. The sequence is that of Minor capsid protein VP2 from Oryctolagus cuniculus (Rabbit).